Consider the following 290-residue polypeptide: MKRTPHLLAIQSHVVFGHAGNSAAVFPMQRIGVNVWPLNTVQFSNHTQYGQWAGEVLAPAQIPALVEGISNIGELGHCDAVLSGYLGSAEQGRAILAGVERIKAVNPKALYLCDPVMGHAEKGCIVPQEVSEFLLDDAVAQADILCPNQLELDSFCGRRAQSLEDCVRMARGLLERGPQVVLVKHLAYPGRCEDMFEMLLVTRDHSWHLRRPLLAFPRQPVGVGDLTSGLFLARVLLGDSWVQAFEYTAAAVHEVLLETQACASYELQLVRAQDRIAYPRVRFEAQRLAF.

Residues Ser-12 and 47–48 (TQ) each bind substrate. ATP-binding positions include Asp-114, Glu-151, Lys-184, and 211–214 (RPLL). Asp-225 lines the substrate pocket.

It belongs to the pyridoxine kinase family. PdxY subfamily. As to quaternary structure, homodimer. It depends on Mg(2+) as a cofactor.

The enzyme catalyses pyridoxal + ATP = pyridoxal 5'-phosphate + ADP + H(+). It functions in the pathway cofactor metabolism; pyridoxal 5'-phosphate salvage; pyridoxal 5'-phosphate from pyridoxal: step 1/1. Its function is as follows. Pyridoxal kinase involved in the salvage pathway of pyridoxal 5'-phosphate (PLP). Catalyzes the phosphorylation of pyridoxal to PLP. This Pseudomonas putida (strain W619) protein is Pyridoxal kinase PdxY.